We begin with the raw amino-acid sequence, 541 residues long: Beta-glucuronidase (541 aa).

The N-terminal stretch at M1 to A20 is a signal peptide. N69, N115, and N157 each carry an N-linked (GlcNAc...) asparagine glycan. E208 serves as the catalytic Proton donor. 3 N-linked (GlcNAc...) asparagine glycosylation sites follow: N217, N291, and N304. Residue E324 is the Nucleophile of the active site. 5 N-linked (GlcNAc...) asparagine glycosylation sites follow: N380, N426, N441, N483, and N512.

The protein belongs to the glycosyl hydrolase 79 family. N-glycosylated.

It localises to the secreted. The enzyme catalyses a beta-D-glucuronoside + H2O = D-glucuronate + an alcohol. Its function is as follows. Beta-glucuronidase that hydrolyzes beta-glucuronosyl and 4-O-methyl-beta-glucuronosyl residues of arabinogalactan-protein. Hydrolyzed heparan sulfate only very weakly. Has no activity on xylan from birchwood. Able to catalyze the transglycosylation of glucuronic acid (GlcA) residues from p-nitrophenyl-beta-glucuronic acid (PNP beta-GlcA) to various monosaccharide acceptors such as glucose, galactose and xylose. The sequence is that of Beta-glucuronidase from Aspergillus niger (strain ATCC MYA-4892 / CBS 513.88 / FGSC A1513).